Reading from the N-terminus, the 503-residue chain is Cytochrome P450 11B1, mitochondrial (503 aa).

The transit peptide at 1–24 directs the protein to the mitochondrion; sequence MALRAKAEVCMAAPWLSLQRARAL. Residue cysteine 450 participates in heme binding.

It belongs to the cytochrome P450 family. The cofactor is heme.

The protein resides in the mitochondrion inner membrane. It carries out the reaction a steroid + 2 reduced [adrenodoxin] + O2 + 2 H(+) = an 11beta-hydroxysteroid + 2 oxidized [adrenodoxin] + H2O. The catalysed reaction is 11-deoxycortisol + 2 reduced [adrenodoxin] + O2 + 2 H(+) = cortisol + 2 oxidized [adrenodoxin] + H2O. The enzyme catalyses 21-hydroxyprogesterone + 2 reduced [adrenodoxin] + O2 + 2 H(+) = corticosterone + 2 oxidized [adrenodoxin] + H2O. It catalyses the reaction 21-hydroxyprogesterone + 2 reduced [adrenodoxin] + O2 + 2 H(+) = 18-hydroxy-11-deoxycorticosterone + 2 oxidized [adrenodoxin] + H2O. It carries out the reaction 21-hydroxyprogesterone + 2 reduced [adrenodoxin] + O2 + 2 H(+) = 19-hydroxy-11-deoxycorticosterone + 2 oxidized [adrenodoxin] + H2O. The catalysed reaction is cortisol + 2 reduced [adrenodoxin] + O2 + 2 H(+) = 18-hydroxycortisol + 2 oxidized [adrenodoxin] + H2O. The enzyme catalyses 11-deoxycortisol + 2 reduced [adrenodoxin] + O2 + 2 H(+) = 18-hydroxy-11-deoxycortisol + 2 oxidized [adrenodoxin] + H2O. Its pathway is steroid biosynthesis; glucocorticoid biosynthesis. It participates in steroid hormone biosynthesis. Its function is as follows. A cytochrome P450 monooxygenase involved in the biosynthesis of adrenal corticoids. Catalyzes a variety of reactions that are essential for many species, including detoxification, defense, and the formation of endogenous chemicals like steroid hormones. Steroid 11beta, 18- and 19-hydroxylase with preferred regioselectivity at 11beta, then 18, and lastly 19. Catalyzes the hydroxylation of 11-deoxycortisol and 11-deoxycorticosterone (21-hydroxyprogesterone) at 11beta position, yielding cortisol or corticosterone, respectively, but cannot produce aldosterone. Mechanistically, uses molecular oxygen inserting one oxygen atom into a substrate for hydroxylation and reducing the second into a water molecule. Two electrons are provided by NADPH via a two-protein mitochondrial transfer system comprising flavoprotein FDXR (adrenodoxin/ferredoxin reductase) and nonheme iron-sulfur protein FDX1 or FDX2 (adrenodoxin/ferredoxin). Due to its lack of 18-oxidation activity, it is incapable of generating aldosterone. Could also be involved in the androgen metabolic pathway. In Papio hamadryas ursinus (Chacma baboon), this protein is Cytochrome P450 11B1, mitochondrial (CYP11B1).